The sequence spans 508 residues: Glycogen synthase (508 aa).

Position 27 (lysine 27) interacts with ADP-alpha-D-glucose.

This sequence belongs to the glycosyltransferase 1 family. Bacterial/plant glycogen synthase subfamily.

It carries out the reaction [(1-&gt;4)-alpha-D-glucosyl](n) + ADP-alpha-D-glucose = [(1-&gt;4)-alpha-D-glucosyl](n+1) + ADP + H(+). It participates in glycan biosynthesis; glycogen biosynthesis. Functionally, synthesizes alpha-1,4-glucan chains using ADP-glucose. This is Glycogen synthase from Photobacterium profundum (strain SS9).